The sequence spans 147 residues: Allograft inflammatory factor 1 (147 aa).

At serine 2 the chain carries N-acetylserine. Lysine 11 bears the N6-acetyllysine mark. Residue serine 39 is modified to Phosphoserine. The region spanning 45 to 80 (SKLEGFKEKYMEFDLNGNGDIDIMSLKRMLEKLGVP) is the EF-hand 1 domain. Aspartate 58, asparagine 60, asparagine 62, aspartate 64, threonine 100, and aspartate 105 together coordinate Ca(2+). The region spanning 81–115 (KTHLELKKLIGEVSSGSGETFSYPDFLRMMLGKRS) is the EF-hand 2; degenerate domain. Residues 128 to 147 (AREKEKPTGPPAKKAISELP) form a disordered region.

Homodimer (Potential). Monomer. Interacts with LCP1. Post-translationally, phosphorylated on serine residues. In terms of tissue distribution, detected in T-lymphocytes and peripheral blood mononuclear cells.

The protein localises to the cytoplasm. Its subcellular location is the cytoskeleton. The protein resides in the cell projection. It localises to the ruffle membrane. It is found in the phagocytic cup. Its function is as follows. Actin-binding protein that enhances membrane ruffling and RAC activation. Enhances the actin-bundling activity of LCP1. Binds calcium. Plays a role in RAC signaling and in phagocytosis. May play a role in macrophage activation and function. Promotes the proliferation of vascular smooth muscle cells and of T-lymphocytes. Enhances lymphocyte migration. Plays a role in vascular inflammation. In Homo sapiens (Human), this protein is Allograft inflammatory factor 1 (AIF1).